The sequence spans 503 residues: Probable voltage-gated potassium channel subunit kvs-4 (503 aa).

Residues 1–231 (MNSAIMQGAA…EPASSGKAQA (231 aa)) are Cytoplasmic-facing. The short motif at 217 to 219 (WNI) is the Required for dendritic localization element. A helical transmembrane segment spans residues 232-252 (FAVCSVVFVLISISGLVLGSL). The Extracellular portion of the chain corresponds to 253–275 (PELQVATKQRNNLTGEEFTEMEP). Residue N264 is glycosylated (N-linked (GlcNAc...) asparagine). A helical membrane pass occupies residues 276–296 (MPILGYIEYVCIVWFTMEYGL). Over 297-313 (KMLVSAERSKTFRQLLN) the chain is Cytoplasmic. The chain crosses the membrane as a helical span at residues 314 to 334 (IIDLLAILPFIIEMLLLIFGI). Topologically, residues 335–346 (STEQLRDLKGAF) are extracellular. A helical; Voltage-sensor membrane pass occupies residues 347-366 (LVIRILRVLRVIRVLKLGRY). Topologically, residues 367 to 383 (SSGLQMFGKTLKASFRQ) are cytoplasmic. Residues 368–383 (SGLQMFGKTLKASFRQ) form an S4-S5 linker region. The helical transmembrane segment at 384-404 (LGMMAMVVMTGVIFFSTLVYF) threads the bilayer. Topologically, residues 405–417 (LEKDEPASKFHSI) are extracellular. An intramembrane region (helical) is located at residues 418 to 429 (PAACWWCIVTMT). The stretch at 430–434 (TVGYG) is an intramembrane region. The Selectivity filter signature appears at 430–435 (TVGYGD). Residues 435–445 (DLTPVTVPGKL) are Extracellular-facing. A helical transmembrane segment spans residues 446-466 (VATGAIACGVLVLALPITIIV). The Cytoplasmic segment spans residues 467–503 (DNFMKVAETERPAGGNRYRTSQYPKATKSEQMILKVT). The Required for dendritic localization signature appears at 496 to 500 (EQMIL).

This sequence belongs to the potassium channel family. B (Shab) (TC 1.A.1.2) subfamily. Kv2.2/KCNB2 sub-subfamily. As to quaternary structure, homotetramer or heterotetramer. Interacts with unc-101 (via N-terminus); which targets kvs-4 to dendrites. In terms of tissue distribution, expressed in the cholinergic motor neuron DA9, mechanosensory neurons ALM and PLM, and the interneuron PVPL.

The protein localises to the cell membrane. It is found in the perikaryon. The protein resides in the cell projection. Its subcellular location is the axon. It localises to the dendrite. Its function is as follows. Voltage-gated potassium channel that mediates transmembrane potassium transport in excitable membranes. The protein is Probable voltage-gated potassium channel subunit kvs-4 of Caenorhabditis elegans.